A 113-amino-acid chain; its full sequence is Flagellar hook-basal body complex protein FliE (113 aa).

Belongs to the FliE family.

The protein localises to the bacterial flagellum basal body. The protein is Flagellar hook-basal body complex protein FliE of Rhizobium leguminosarum bv. trifolii (strain WSM2304).